We begin with the raw amino-acid sequence, 426 residues long: MLDVKVLRQDLEEVKRRLAHRNEDISALDQFVEVDEKRREVIQEAEALKNKRNTVSEQVAVMKRNKENADHLIAEMKEVNERIKALDEELRQLDEQLEFILLSLPNLPHESTPIGTTEDDNVIAWTWGEPRAFDFEIKPHWELASQAGILDFETAAKVTGSRFVFYKGLGARLERALMNFMMDLHSNEHGYEEVIPPFIVNRTSMTGTGQLPKFEEDAFKIEGPDYFLIPTAEVPVTNMHRDEIMDGADLPRYYTAFSACFRSEAGSAGRDTRGLIRQHQFNKVELVKFVKPEESYDELDKLVKNAEKVLQLLGLPYRVLSMCTGDLGFTAAKKFDIEVWIPSGDTYREISSCSNFEDFQARRANIRFRRDTKSKPEFVHTLNGSGLAIGRTVAAILENYQEADGAIVIPEVLRPYMGGVDKIAPK.

231 to 233 (TAE) serves as a coordination point for L-serine. ATP is bound at residue 262–264 (RSE). Glu285 provides a ligand contact to L-serine. 349 to 352 (EISS) provides a ligand contact to ATP. Ser385 contributes to the L-serine binding site.

It belongs to the class-II aminoacyl-tRNA synthetase family. Type-1 seryl-tRNA synthetase subfamily. In terms of assembly, homodimer. The tRNA molecule binds across the dimer.

It is found in the cytoplasm. It catalyses the reaction tRNA(Ser) + L-serine + ATP = L-seryl-tRNA(Ser) + AMP + diphosphate + H(+). The catalysed reaction is tRNA(Sec) + L-serine + ATP = L-seryl-tRNA(Sec) + AMP + diphosphate + H(+). Its pathway is aminoacyl-tRNA biosynthesis; selenocysteinyl-tRNA(Sec) biosynthesis; L-seryl-tRNA(Sec) from L-serine and tRNA(Sec): step 1/1. Catalyzes the attachment of serine to tRNA(Ser). Is also able to aminoacylate tRNA(Sec) with serine, to form the misacylated tRNA L-seryl-tRNA(Sec), which will be further converted into selenocysteinyl-tRNA(Sec). The protein is Serine--tRNA ligase of Brevibacillus brevis (strain 47 / JCM 6285 / NBRC 100599).